The following is a 189-amino-acid chain: Autophagy receptor ATG45 (189 aa).

Positions 1 to 96 are binds glycogen; the sequence is MSNFLLVIPE…TNNILHFKDN (96 aa). The segment at 97 to 189 is required for sequestration into autophagosomes; sequence EASQLMDIPL…AKKVKTYWNK (93 aa). S107 is modified (phosphoserine). The short motif at 127 to 130 is the ATG8 interaction motif (AIM) element; sequence YVNL. S172 is modified (phosphoserine). Residues 176–187 form a may facilitate interactions with the autophagosome membrane region; it reads LMCIAKKVKTYW.

Interacts with ATG8.

It localises to the cytoplasm. Its subcellular location is the cytosol. It is found in the cytoplasmic vesicle. The protein localises to the autophagosome. Functionally, autophagy receptor for glycogen that facilitates the sequestration of glycogen assemblies into autophagosomes as part of bulk autophagy; the autophagy of glycogen (glycophagy) is stimulated during prolonged nitrogen starvation and during sporulation. This is Autophagy receptor ATG45 from Saccharomyces cerevisiae (strain ATCC 204508 / S288c) (Baker's yeast).